Reading from the N-terminus, the 408-residue chain is Peptidase T (408 aa).

Residue His-78 coordinates Zn(2+). Residue Asp-80 is part of the active site. Asp-140 serves as a coordination point for Zn(2+). Glu-174 (proton acceptor) is an active-site residue. The Zn(2+) site is built by Glu-175, Asp-197, and His-379.

This sequence belongs to the peptidase M20B family. The cofactor is Zn(2+).

Its subcellular location is the cytoplasm. The enzyme catalyses Release of the N-terminal residue from a tripeptide.. In terms of biological role, cleaves the N-terminal amino acid of tripeptides. This is Peptidase T from Staphylococcus aureus (strain MRSA252).